The chain runs to 410 residues: Transforming growth factor beta-3 proprotein (410 aa).

The N-terminal stretch at 1–23 is a signal peptide; sequence MHLQRALVVLALLNLATISLSLS. N-linked (GlcNAc...) asparagine glycosylation is found at Asn72, Asn133, and Asn140. Residues 259 to 261 carry the Cell attachment site motif; it reads RGD. N5-methylglutamine is present on Gln291. 4 cysteine pairs are disulfide-bonded: Cys305–Cys314, Cys313–Cys376, Cys342–Cys407, and Cys346–Cys409.

The protein belongs to the TGF-beta family. Interacts with ASPN. Latency-associated peptide: Homodimer; disulfide-linked. Latency-associated peptide: Interacts with Transforming growth factor beta-3 (TGF-beta-3) chain; interaction is non-covalent and maintains (TGF-beta-3) in a latent state. Latency-associated peptide: Interacts with LRRC32/GARP; leading to regulate activation of TGF-beta-3 and promote epithelial fusion during palate development. Latency-associated peptide: Interacts (via cell attachment site) with integrins, leading to release of the active TGF-beta-3. Transforming growth factor beta-3: Homodimer; disulfide-linked. Transforming growth factor beta-3: Interacts with TGF-beta receptors (TGFBR1 and TGFBR2), leading to signal transduction. Post-translationally, transforming growth factor beta-3 proprotein: The precursor proprotein is cleaved in the Golgi apparatus to form Transforming growth factor beta-3 (TGF-beta-3) and Latency-associated peptide (LAP) chains, which remain non-covalently linked, rendering TGF-beta-3 inactive. Methylated at Gln-291 by N6AMT1. In terms of tissue distribution, expressed in mammary glands with a slight increase in expression prior to lactation and again increasing at the onset of involution, expression peaks at day 3 of involution.

The protein localises to the secreted. The protein resides in the extracellular space. It localises to the extracellular matrix. Transforming growth factor beta-3 proprotein: Precursor of the Latency-associated peptide (LAP) and Transforming growth factor beta-3 (TGF-beta-3) chains, which constitute the regulatory and active subunit of TGF-beta-3, respectively. Its function is as follows. Required to maintain the Transforming growth factor beta-3 (TGF-beta-3) chain in a latent state during storage in extracellular matrix. Associates non-covalently with TGF-beta-3 and regulates its activation via interaction with 'milieu molecules', such as LTBP1 and LRRC32/GARP, that control activation of TGF-beta-3. Interaction with integrins results in distortion of the Latency-associated peptide chain and subsequent release of the active TGF-beta-3. Functionally, transforming growth factor beta-3: Multifunctional protein that regulates embryogenesis and cell differentiation and is required in various processes such as secondary palate development. Activation into mature form follows different steps: following cleavage of the proprotein in the Golgi apparatus, Latency-associated peptide (LAP) and Transforming growth factor beta-3 (TGF-beta-3) chains remain non-covalently linked rendering TGF-beta-3 inactive during storage in extracellular matrix. At the same time, LAP chain interacts with 'milieu molecules', such as LTBP1 and LRRC32/GARP that control activation of TGF-beta-3 and maintain it in a latent state during storage in extracellular milieus. TGF-beta-3 is released from LAP by integrins: integrin-binding results in distortion of the LAP chain and subsequent release of the active TGF-beta-3. Once activated following release of LAP, TGF-beta-3 acts by binding to TGF-beta receptors (TGFBR1 and TGFBR2), which transduce signal. This is Transforming growth factor beta-3 proprotein from Mus musculus (Mouse).